The sequence spans 141 residues: Large ribosomal subunit protein uL23B (141 aa).

The interval 1-22 is disordered; that stretch reads MSVGKAKGAQKTVQKGIHNKVA.

Belongs to the universal ribosomal protein uL23 family. As to quaternary structure, component of the large ribosomal subunit (LSU). Mature yeast ribosomes consist of a small (40S) and a large (60S) subunit. The 40S small subunit contains 1 molecule of ribosomal RNA (18S rRNA) and at least 33 different proteins. The large 60S subunit contains 3 rRNA molecules (25S, 5.8S and 5S rRNA) and at least 46 different proteins. uL23 is associated with the polypeptide exit tunnel.

Its subcellular location is the cytoplasm. Its function is as follows. This protein binds to a specific region on the 26S rRNA. Component of the ribosome, a large ribonucleoprotein complex responsible for the synthesis of proteins in the cell. The small ribosomal subunit (SSU) binds messenger RNAs (mRNAs) and translates the encoded message by selecting cognate aminoacyl-transfer RNA (tRNA) molecules. The large subunit (LSU) contains the ribosomal catalytic site termed the peptidyl transferase center (PTC), which catalyzes the formation of peptide bonds, thereby polymerizing the amino acids delivered by tRNAs into a polypeptide chain. The nascent polypeptides leave the ribosome through a tunnel in the LSU and interact with protein factors that function in enzymatic processing, targeting, and the membrane insertion of nascent chains at the exit of the ribosomal tunnel. uL23 is a major component of the universal docking site for these factors at the polypeptide exit tunnel. This chain is Large ribosomal subunit protein uL23B (rpl2502), found in Schizosaccharomyces pombe (strain 972 / ATCC 24843) (Fission yeast).